We begin with the raw amino-acid sequence, 452 residues long: Coproporphyrinogen III oxidase, anaerobic 1 (452 aa).

Positions 45-278 constitute a Radical SAM core domain; sequence LDPAVPISVY…ANLAARLFTE (234 aa). Y54 is an S-adenosyl-L-methionine binding site. [4Fe-4S] cluster is bound by residues C60 and C64. F66 provides a ligand contact to S-adenosyl-L-methionine. [4Fe-4S] cluster is bound at residue C67. Residues G111, 112–113, E144, Q171, R183, and D208 contribute to the S-adenosyl-L-methionine site; that span reads GT.

The protein belongs to the anaerobic coproporphyrinogen-III oxidase family. Monomer. The cofactor is [4Fe-4S] cluster.

The protein localises to the cytoplasm. It carries out the reaction coproporphyrinogen III + 2 S-adenosyl-L-methionine = protoporphyrinogen IX + 2 5'-deoxyadenosine + 2 L-methionine + 2 CO2. It functions in the pathway porphyrin-containing compound metabolism; protoporphyrin-IX biosynthesis; protoporphyrinogen-IX from coproporphyrinogen-III (AdoMet route): step 1/1. Functionally, anaerobic transformation of coproporphyrinogen III into protoporphyrinogen IX. Dedicated to bacteriochlorophyll biosynthesis. In Cereibacter sphaeroides (strain ATCC 17023 / DSM 158 / JCM 6121 / CCUG 31486 / LMG 2827 / NBRC 12203 / NCIMB 8253 / ATH 2.4.1.) (Rhodobacter sphaeroides), this protein is Coproporphyrinogen III oxidase, anaerobic 1 (hemN).